Consider the following 296-residue polypeptide: Elongation factor Ts (296 aa).

An involved in Mg(2+) ion dislocation from EF-Tu region spans residues 81-84 (TDFV).

This sequence belongs to the EF-Ts family.

Its subcellular location is the cytoplasm. Associates with the EF-Tu.GDP complex and induces the exchange of GDP to GTP. It remains bound to the aminoacyl-tRNA.EF-Tu.GTP complex up to the GTP hydrolysis stage on the ribosome. In Ruthia magnifica subsp. Calyptogena magnifica, this protein is Elongation factor Ts.